The primary structure comprises 359 residues: Guanine nucleotide-binding protein subunit alpha-11 (359 aa).

Residues Cys9 and Cys10 are each lipidated (S-palmitoyl cysteine). The region spanning 38-359 (RELKLLLLGT…QLNLKEYNLV (322 aa)) is the G-alpha domain. Residues 41–54 (KLLLLGTGESGKST) form a G1 motif region. Residues 46-53 (GTGESGKS) and 180-183 (LRVR) contribute to the GTP site. Ser53 contacts Mg(2+). The segment at 178 to 186 (DVLRVRVPT) is G2 motif. Thr186 provides a ligand contact to Mg(2+). The segment at 201–210 (FRMVDVGGQR) is G3 motif. A G4 motif region spans residues 270–277 (ILFLNKKD). Residues 274-277 (NKKD) and Ala331 each bind GTP. Residues 329-334 (TCATDT) form a G5 motif region.

Belongs to the G-alpha family. G(q) subfamily. As to quaternary structure, g proteins are composed of 3 units; alpha, beta and gamma. The alpha chain contains the guanine nucleotide binding site. Interacts with RGS22. Interacts with NTSR1.

It localises to the cell membrane. The protein localises to the cytoplasm. It carries out the reaction GTP + H2O = GDP + phosphate + H(+). Guanine nucleotide-binding proteins (G proteins) function as transducers downstream of G protein-coupled receptors (GPCRs) in numerous signaling cascades. The alpha chain contains the guanine nucleotide binding site and alternates between an active, GTP-bound state and an inactive, GDP-bound state. Signaling by an activated GPCR promotes GDP release and GTP binding. The alpha subunit has a low GTPase activity that converts bound GTP to GDP, thereby terminating the signal. Both GDP release and GTP hydrolysis are modulated by numerous regulatory proteins. Signaling is mediated via phospholipase C-beta-dependent inositol lipid hydrolysis for signal propagation: activates phospholipase C-beta: following GPCR activation, GNA11 activates PLC-beta (PLCB1, PLCB2, PLCB3 or PLCB4), leading to production of diacylglycerol (DAG) and inositol 1,4,5-trisphosphate (IP3). Transduces FFAR4 signaling in response to long-chain fatty acids (LCFAs). Together with GNAQ, required for heart development. In the respiratory epithelium, transmits OXGR1-dependent signals that lead to downstream intracellular Ca(2+) release and mucocilliary clearance of airborne pathogens. The chain is Guanine nucleotide-binding protein subunit alpha-11 (GNA11) from Bos taurus (Bovine).